An 885-amino-acid chain; its full sequence is Ankyrin repeat and SAM domain-containing protein 6 (885 aa).

ANK repeat units follow at residues 8–37 (PGLQ…EPVA), 68–97 (AGNS…SVNS), 101–130 (YGWS…DVNA), 134–163 (LGAS…TVDH), 181–210 (LGIT…DPNH), 215–244 (VGWS…NPDH), 282–312 (KRRP…HVNL), 316–345 (DGAT…DMNK), 350–379 (HGWT…DVTL), and 383–414 (NGYT…QVNK). Asn129 is modified (3-hydroxyasparagine). Disordered regions lie at residues 415 to 439 (DRGG…SIPM), 491 to 522 (MRAP…PRRE), 563 to 775 (SSDR…ITDE), and 855 to 885 (FESS…SSRR). The segment covering 608-640 (PSISRSPTSPASSGNFNHSPHSSGGASGVGSMS) has biased composition (low complexity). Ser650 is modified (phosphoserine). Positions 650–662 (SGGSVDSVLSQIA) are enriched in polar residues. Low complexity-rich tracts occupy residues 689-713 (GSSP…TSSS) and 722-739 (PPSG…TLTP). Ser734 and Ser742 each carry phosphoserine. Over residues 750-770 (SSVSSSSSHRQSKSSGGSSSG) the composition is skewed to low complexity. The 64-residue stretch at 773–836 (TDEDELTGIL…LAAISELNAG (64 aa)) folds into the SAM domain. Residues 855-865 (FESSASNTRAP) show a composition bias toward polar residues. The segment covering 876–885 (RPEETVSSRR) has biased composition (basic and acidic residues).

In terms of assembly, homooligomer. Interacts with NEK8. Central component of a complex containing at least ANKS6, INVS, NEK8 and NPHP3. ANKS6 may organize complex assembly by linking INVS and NPHP3 to NEK8 and INVS may target the complex to the proximal ciliary axoneme. Interacts (via SAM domain) with BICC1 (via KH domains) in an RNA-dependent manner. Interacts (via SAM domain) with ANKS3 (via SAM domain). Post-translationally, hydroxylated at Asn-129, most probably by HIF1AN. This hydroxylation results in decreased NEK8-binding. In terms of tissue distribution, widely expressed with moderate level in brain, skeletal muscle and testis. Expressed in renal tubules.

It is found in the cell projection. The protein localises to the cilium. Its subcellular location is the cytoplasm. In terms of biological role, required for renal function. The sequence is that of Ankyrin repeat and SAM domain-containing protein 6 (Anks6) from Rattus norvegicus (Rat).